A 105-amino-acid polypeptide reads, in one-letter code: uncharacterized protein (105 aa).

A helical membrane pass occupies residues 29 to 49 (NAFLLILSEAYLLFVFLSYLI).

The protein resides in the membrane. This is an uncharacterized protein from Saccharomyces cerevisiae (strain ATCC 204508 / S288c) (Baker's yeast).